A 286-amino-acid chain; its full sequence is Ferric acinetobactin reductase (286 aa).

Positions M25–N131 constitute an FAD-binding FR-type domain. 12 residues coordinate FAD: R79, V80, T82, D96, V98, H100, D102, S104, A106, R250, G252, and S255.

Belongs to the SIP oxidoreductase family. In terms of assembly, monomer in solution. FAD is required as a cofactor.

The enzyme catalyses 2 a Fe(II)-siderophore + NAD(+) + H(+) = 2 a Fe(III)-siderophore + NADH. It carries out the reaction 2 a Fe(II)-siderophore + NADP(+) + H(+) = 2 a Fe(III)-siderophore + NADPH. Ferric-siderophore reductase involved in iron removal from the siderophores after their transport into the cell. Interacts with the siderophores acinetobactin (Acb) and preacinetobactin (pre-Acb) and catalyzes the reduction of the ferric iron bound to the siderophores to ferrous iron, resulting in destabilization of the siderophore chelation complex and entrance of ferrous iron into the intracellular pool of bioavailable metals. Can use NADH and NADPH as electron donors in vitro, but the reduction rate is very slow, suggesting that NADH and NADPH are not the physiological partners of BauF. In Acinetobacter baumannii, this protein is Ferric acinetobactin reductase.